Here is an 886-residue protein sequence, read N- to C-terminus: Desmocollin-1 (886 aa).

Positions 1 to 29 (MAVACAAPGSTFSKQLLFFLLVLVLFCDA) are cleaved as a signal peptide. A propeptide spanning residues 30-134 (CQKVSLHVPS…KEPVHNRSKR (105 aa)) is cleaved from the precursor. Residues N130 and N165 are each glycosylated (N-linked (GlcNAc...) asparagine). Cadherin domains lie at 135–242 (RWAP…APYF), 243–354 (ETKL…SPYF), 355–471 (TQTS…GPEC), 472–575 (QPPV…DHPP), and 576–682 (QIDK…EERD). Residues 135–691 (RWAPIPCSLM…DAKPNIILGK (557 aa)) lie on the Extracellular side of the membrane. T385 is modified (phosphothreonine). N-linked (GlcNAc...) (high mannose) asparagine glycosylation occurs at N546. N-linked (GlcNAc...) asparagine glycosylation occurs at N613. A helical membrane pass occupies residues 692-714 (WAILAMVLGSALLLCILFTCFCV). The Cytoplasmic segment spans residues 715–886 (TTTKRTVKKC…RTLAKTCVKK (172 aa)).

As to quaternary structure, binds to JUP/plakoglobin. Expressed in the epidermis and inner root sheaths of hair follicles (at protein level).

The protein localises to the cell membrane. The protein resides in the cell junction. It localises to the desmosome. Its function is as follows. A component of desmosome cell-cell junctions which are required for positive regulation of cellular adhesion. Required for desmosome adhesion strength between the granular layers of the epidermis, as a result moderates epidermal proliferation and differentiation. Is therefore required to maintain postnatal epidermal barrier function and normal hair follicle morphology into adulthood. The sequence is that of Desmocollin-1 (Dsc1) from Mus musculus (Mouse).